A 206-amino-acid chain; its full sequence is HTH-type transcriptional regulator Hpr (206 aa).

The region spanning 13 to 157 (ALLFSQRMAQ…MMSIIRHIYG (145 aa)) is the HTH marR-type domain. Residues 63–86 (ISEIAKFGVMHVSTAFNFSKKLEE) constitute a DNA-binding region (H-T-H motif). Residues 177-206 (SEEGKMKKKQEAKEAGESIEVDKPLEPLKN) are disordered. Basic and acidic residues predominate over residues 178-206 (EEGKMKKKQEAKEAGESIEVDKPLEPLKN).

As to quaternary structure, homodimer.

In terms of biological role, negative regulator of protease production and sporulation. This chain is HTH-type transcriptional regulator Hpr, found in Bacillus licheniformis (strain ATCC 14580 / DSM 13 / JCM 2505 / CCUG 7422 / NBRC 12200 / NCIMB 9375 / NCTC 10341 / NRRL NRS-1264 / Gibson 46).